We begin with the raw amino-acid sequence, 410 residues long: ACT domain-containing protein ACR10 (410 aa).

ACT domains lie at 22 to 105, 114 to 197, and 245 to 324; these read VITI…SESQ, LLKL…LVGP, and LIHI…VVMM.

In terms of biological role, may bind amino acids. The polypeptide is ACT domain-containing protein ACR10 (Arabidopsis thaliana (Mouse-ear cress)).